Reading from the N-terminus, the 85-residue chain is Exodeoxyribonuclease 7 small subunit (85 aa).

This sequence belongs to the XseB family. Heterooligomer composed of large and small subunits.

It is found in the cytoplasm. The enzyme catalyses Exonucleolytic cleavage in either 5'- to 3'- or 3'- to 5'-direction to yield nucleoside 5'-phosphates.. Its function is as follows. Bidirectionally degrades single-stranded DNA into large acid-insoluble oligonucleotides, which are then degraded further into small acid-soluble oligonucleotides. The polypeptide is Exodeoxyribonuclease 7 small subunit (Mycobacterium bovis (strain ATCC BAA-935 / AF2122/97)).